The sequence spans 537 residues: Tegument protein BRRF2 (537 aa).

Disordered stretches follow at residues Leu-325–Asp-474 and Gly-486–Ile-537. Polar residues predominate over residues Lys-334–Asn-347. The span at Ser-423–Gly-441 shows a compositional bias: low complexity. Positions Asp-492–Glu-517 are enriched in acidic residues.

Belongs to the lymphocryptovirus BRRF2 family.

The protein resides in the virion tegument. This chain is Tegument protein BRRF2, found in Homo sapiens (Human).